Here is a 765-residue protein sequence, read N- to C-terminus: Protein transport protein Sec23A (765 aa).

Position 2 is an N-acetylthreonine (T2). The Zn(2+) site is built by C61, C66, C85, and C88. T308 bears the Phosphothreonine mark. The stretch at P632–L718 is one Gelsolin-like repeat.

The protein belongs to the SEC23/SEC24 family. SEC23 subfamily. As to quaternary structure, COPII is composed of at least five proteins: the Sec23/24 complex, the Sec13/31 complex and Sar1. Interacts with SEC23IP. Interacts with HTR4. Interacts with SEC16A. Interacts with SLC6A4. Interacts (as part of the Sec23/24 complex) with SEC22B; recruits SEC22B into COPII-coated vesicles and allows the transport of this cargo from the endoplasmic reticulum to the Golgi. Interacts (via Gelsolin-like repeat) with MIA2 and MIA3; specifically involved in the transport of large cargos like the collagen COL7A1. Interacts with DDHD1. Interacts with TMEM39A. Interacts with SACM1L; this interaction is reduced in the absence of TMEM39A. Interacts with kinase FAM20C; transport of FAM20C from the endoplasmic reticulum to the Golgi is likely to be mediated by COPII vesicles.

The protein localises to the cytoplasmic vesicle. It is found in the COPII-coated vesicle membrane. Its subcellular location is the endoplasmic reticulum membrane. The protein resides in the cytoplasm. It localises to the cytosol. Component of the coat protein complex II (COPII) which promotes the formation of transport vesicles from the endoplasmic reticulum (ER). The coat has two main functions, the physical deformation of the endoplasmic reticulum membrane into vesicles and the selection of cargo molecules for their transport to the Golgi complex. Required for the translocation of insulin-induced glucose transporter SLC2A4/GLUT4 to the cell membrane. The protein is Protein transport protein Sec23A of Pongo abelii (Sumatran orangutan).